The following is a 1898-amino-acid chain: 1-phosphatidylinositol 4,5-bisphosphate phosphodiesterase epsilon-1 (1898 aa).

Residues 66-328 (FPEEVAFQLS…EREQKEKEAK (263 aa)) enclose the Ras-GEF domain. 2 disordered regions span residues 419 to 444 (QPLD…GVGV) and 569 to 722 (TNTN…GPSG). The segment covering 569–583 (TNTNATRPNDSSLSS) has biased composition (polar residues). Residues 590–605 (SRLKNLKNAMQKKLRG) show a composition bias toward basic residues. 3 stretches are compositionally biased toward low complexity: residues 625–637 (PPSI…SQSG), 666–687 (YTPR…GGRS), and 701–716 (SGSI…QVSG). In terms of domain architecture, PI-PLC X-box spans 910-1058 (EDLRYPLSHY…MKNKILIKNK (149 aa)). Active-site residues include H925 and H970. 2 disordered regions span residues 1082-1178 (QLNL…DRKT) and 1238-1274 (EEGP…STQL). A compositionally biased stretch (acidic residues) spans 1098–1123 (TVDEVEDDDLDEFLDDEENEEDDQEE). The segment covering 1124 to 1144 (VQVRSEKEDSPKTSKRAEKSA) has biased composition (basic and acidic residues). Residues 1146–1155 (NIKQQDSLCS) show a composition bias toward polar residues. 2 stretches are compositionally biased toward low complexity: residues 1163 to 1172 (KPSTSKTTSK) and 1242 to 1253 (ASASLSFSSRAR). In terms of domain architecture, PI-PLC Y-box spans 1279 to 1385 (AAEFLGSVRA…CGYQLKPRCL (107 aa)). The C2 domain maps to 1391–1517 (LLYNKFLPLS…PLRTPTNLPI (127 aa)). The Ras-associating 1 domain maps to 1570–1665 (QIFVLRITGA…RRFVLRKKGS (96 aa)). Positions 1680-1694 (GTSGSSTSVSPSPLT) are enriched in low complexity. The disordered stretch occupies residues 1680–1711 (GTSGSSTSVSPSPLTKDGHVKSASSNQLHGRS). In terms of domain architecture, Ras-associating 2 spans 1738 to 1857 (DTFLVCVHNV…GRFVLENRKD (120 aa)).

In terms of assembly, interacts (via Ras-associating domain 1) with let-60 (in GTP-bound form). It depends on Ca(2+) as a cofactor. In terms of tissue distribution, expressed in the spermatheca, vulva, intestine and excretory cells. Expressed in sensory neurons AWC, AFD, ASE, ASG and BAG, interneurons, ventral nerve cord neurons and tail neurons. Expressed in body muscles.

It catalyses the reaction a 1,2-diacyl-sn-glycero-3-phospho-(1D-myo-inositol-4,5-bisphosphate) + H2O = 1D-myo-inositol 1,4,5-trisphosphate + a 1,2-diacyl-sn-glycerol + H(+). In terms of biological role, the production of the second messenger molecules diacylglycerol (DAG) and inositol 1,4,5-trisphosphate (IP3) is mediated by activated phosphatidylinositol-specific phospholipase C enzymes. plc-1 is a bifunctional enzyme which also regulates small GTPases of the Ras superfamily through its Ras guanine-exchange factor (RasGEF) activity. By activating IP3 receptor itr-1-mediated intracellular Ca(2+) release via the production of IP3, regulates ovulation by controlling contraction and/or dilation of the distal spermatheca valve during oocyte entry and the timing of the dilation of the spermatheca-uterine valve during oocyte exit. In a similar manner, plays an essential role in epidermal morphogenesis by regulating migration of epidermal cells during ventral closure and to a lesser extent by regulating epidermal cell dorsal intercalation. Involved in the immune response to S.aureus bacterium by activating kinase dkf-1 via the production of DAG which in turn activates transcription factor hlh-30. In ASER neurons, required for adjusting the orientation behavior in salt gradients based on the memory of previous salt concentration encountered. This chain is 1-phosphatidylinositol 4,5-bisphosphate phosphodiesterase epsilon-1, found in Caenorhabditis elegans.